Here is a 91-residue protein sequence, read N- to C-terminus: Transcription factor ILI7 (91 aa).

Positions 4-58 constitute a bHLH domain; sequence RSRSRASSAARITDEQIGDLVSKLQALLPEARLRSNDRVPSARVLQETCSYIRSL.

The protein belongs to the bHLH protein family.

In terms of biological role, atypical and probable non DNA-binding bHLH transcription factor that integrates multiple signaling pathways to regulate cell elongation and plant development. This chain is Transcription factor ILI7 (ILI7), found in Oryza sativa subsp. indica (Rice).